The primary structure comprises 336 residues: Putative transcription factor avaE (336 aa).

The WRKY DNA-binding region spans 32–100 (TATRLNQTTF…VPLDQNESMP (69 aa)).

Its subcellular location is the nucleus. The protein operates within secondary metabolite biosynthesis. Putative transcription factor; part of the cluster that mediates the biosynthesis of a highly modified cyclo-arginine-tryptophan dipeptide (cRW). The sequence is that of Putative transcription factor avaE from Aspergillus versicolor.